Here is a 359-residue protein sequence, read N- to C-terminus: Guanine nucleotide-binding protein subunit alpha-11 (359 aa).

S-palmitoyl cysteine attachment occurs at residues cysteine 9 and cysteine 10. One can recognise a G-alpha domain in the interval 38 to 359; it reads RELKLLLLGT…QLNLKEYNLV (322 aa). The tract at residues 41-54 is G1 motif; it reads KLLLLGTGESGKST. GTP contacts are provided by residues 46-53 and 180-183; these read GTGESGKS and LRVR. Serine 53 lines the Mg(2+) pocket. Residues 178-186 are G2 motif; the sequence is DVLRVRVPT. Position 186 (threonine 186) interacts with Mg(2+). Residues 201 to 210 form a G3 motif region; that stretch reads FRMVDVGGQR. The tract at residues 270 to 277 is G4 motif; it reads ILFLNKKD. Residues 274 to 277 and alanine 331 each bind GTP; that span reads NKKD. Residues 329 to 334 are G5 motif; that stretch reads TCATDT.

The protein belongs to the G-alpha family. G(q) subfamily. As to quaternary structure, g proteins are composed of 3 units; alpha, beta and gamma. The alpha chain contains the guanine nucleotide binding site. Interacts with RGS22. Interacts with NTSR1.

Its subcellular location is the cell membrane. The protein resides in the cytoplasm. It carries out the reaction GTP + H2O = GDP + phosphate + H(+). Functionally, guanine nucleotide-binding proteins (G proteins) function as transducers downstream of G protein-coupled receptors (GPCRs) in numerous signaling cascades. The alpha chain contains the guanine nucleotide binding site and alternates between an active, GTP-bound state and an inactive, GDP-bound state. Signaling by an activated GPCR promotes GDP release and GTP binding. The alpha subunit has a low GTPase activity that converts bound GTP to GDP, thereby terminating the signal. Both GDP release and GTP hydrolysis are modulated by numerous regulatory proteins. Signaling is mediated via phospholipase C-beta-dependent inositol lipid hydrolysis for signal propagation: activates phospholipase C-beta: following GPCR activation, GNA11 activates PLC-beta (PLCB1, PLCB2, PLCB3 or PLCB4), leading to production of diacylglycerol (DAG) and inositol 1,4,5-trisphosphate (IP3). Transduces FFAR4 signaling in response to long-chain fatty acids (LCFAs). Together with GNAQ, required for heart development. In the respiratory epithelium, transmits OXGR1-dependent signals that lead to downstream intracellular Ca(2+) release and mucocilliary clearance of airborne pathogens. The sequence is that of Guanine nucleotide-binding protein subunit alpha-11 (GNA11) from Sus scrofa (Pig).